The primary structure comprises 112 residues: Integration host factor subunit alpha (112 aa).

The protein belongs to the bacterial histone-like protein family. In terms of assembly, heterodimer of an alpha and a beta chain.

In terms of biological role, this protein is one of the two subunits of integration host factor, a specific DNA-binding protein that functions in genetic recombination as well as in transcriptional and translational control. This is Integration host factor subunit alpha from Sinorhizobium medicae (strain WSM419) (Ensifer medicae).